The chain runs to 211 residues: Chaperone protein TorD (211 aa).

This sequence belongs to the TorD/DmsD family. TorD subfamily.

Its subcellular location is the cytoplasm. Involved in the biogenesis of TorA. Acts on TorA before the insertion of the molybdenum cofactor and, as a result, probably favors a conformation of the apoenzyme that is competent for acquiring the cofactor. The chain is Chaperone protein TorD from Shewanella loihica (strain ATCC BAA-1088 / PV-4).